The following is a 439-amino-acid chain: GTPase Der (439 aa).

EngA-type G domains follow at residues 4–168 (PIVA…KDDE) and 177–352 (INIA…DNYT). Residues 10 to 17 (GRPNVGKS), 57 to 61 (DTGGI), 120 to 123 (NKID), 183 to 190 (GKPNVGKS), 230 to 234 (DTAGL), and 295 to 298 (NKWD) contribute to the GTP site. In terms of domain architecture, KH-like spans 353–437 (KRVKTGVLND…GIKTEFRERK (85 aa)).

It belongs to the TRAFAC class TrmE-Era-EngA-EngB-Septin-like GTPase superfamily. EngA (Der) GTPase family. As to quaternary structure, associates with the 50S ribosomal subunit.

Its function is as follows. GTPase that plays an essential role in the late steps of ribosome biogenesis. This chain is GTPase Der, found in Clostridium botulinum (strain Loch Maree / Type A3).